The following is a 292-amino-acid chain: Pantothenate synthetase (292 aa).

30–37 lines the ATP pocket; the sequence is MGFLHIGH. The active-site Proton donor is H37. Residue Q61 coordinates (R)-pantoate. Q61 provides a ligand contact to beta-alanine. ATP is bound at residue 147–150; sequence GEKD. (R)-pantoate is bound at residue Q153. Residues V176 and 184–187 each bind ATP; that span reads CSSR.

Belongs to the pantothenate synthetase family. In terms of assembly, homodimer.

Its subcellular location is the cytoplasm. It carries out the reaction (R)-pantoate + beta-alanine + ATP = (R)-pantothenate + AMP + diphosphate + H(+). It participates in cofactor biosynthesis; (R)-pantothenate biosynthesis; (R)-pantothenate from (R)-pantoate and beta-alanine: step 1/1. Functionally, catalyzes the condensation of pantoate with beta-alanine in an ATP-dependent reaction via a pantoyl-adenylate intermediate. This chain is Pantothenate synthetase, found in Agrobacterium fabrum (strain C58 / ATCC 33970) (Agrobacterium tumefaciens (strain C58)).